Reading from the N-terminus, the 445-residue chain is Exodeoxyribonuclease 7 large subunit (445 aa).

The protein belongs to the XseA family. In terms of assembly, heterooligomer composed of large and small subunits.

The protein resides in the cytoplasm. It catalyses the reaction Exonucleolytic cleavage in either 5'- to 3'- or 3'- to 5'-direction to yield nucleoside 5'-phosphates.. Bidirectionally degrades single-stranded DNA into large acid-insoluble oligonucleotides, which are then degraded further into small acid-soluble oligonucleotides. This Xanthomonas oryzae pv. oryzae (strain PXO99A) protein is Exodeoxyribonuclease 7 large subunit.